A 177-amino-acid polypeptide reads, in one-letter code: Olfactory protein (177 aa).

An N-terminal signal peptide occupies residues 1-17 (MIRIIAIVVLFFLQCQA). C81 and C174 are oxidised to a cystine.

The protein belongs to the calycin superfamily. Lipocalin family. Synthesized in Bowman glands, which secrete the mucus that bathes the cilia of the olfactory neuroepithelium.

It is found in the secreted. The protein is Olfactory protein of Lithobates pipiens (Northern leopard frog).